A 285-amino-acid polypeptide reads, in one-letter code: 4-diphosphocytidyl-2-C-methyl-D-erythritol kinase (285 aa).

Lys10 is a catalytic residue. ATP is bound at residue 92-102; sequence PFGAGLGGGSS. Residue Asp134 is part of the active site.

The protein belongs to the GHMP kinase family. IspE subfamily.

The catalysed reaction is 4-CDP-2-C-methyl-D-erythritol + ATP = 4-CDP-2-C-methyl-D-erythritol 2-phosphate + ADP + H(+). Its pathway is isoprenoid biosynthesis; isopentenyl diphosphate biosynthesis via DXP pathway; isopentenyl diphosphate from 1-deoxy-D-xylulose 5-phosphate: step 3/6. Its function is as follows. Catalyzes the phosphorylation of the position 2 hydroxy group of 4-diphosphocytidyl-2C-methyl-D-erythritol. In Chloroherpeton thalassium (strain ATCC 35110 / GB-78), this protein is 4-diphosphocytidyl-2-C-methyl-D-erythritol kinase.